The chain runs to 419 residues: eIF5-mimic protein 1 (419 aa).

Residues 1-22 (MNKHQKPVLTGQRFKTRKRDEK) are disordered. Lys117 bears the N6-acetyllysine mark. In terms of domain architecture, W2 spans 248–415 (VQQSLGTRKE…QNAEEESESE (168 aa)). Phosphoserine is present on residues Ser412 and Ser414.

It belongs to the BZW family. As to quaternary structure, interacts with EIF3E. Interacts with EIF2S2. Interacts with EIF3C.

Its subcellular location is the cytoplasm. In terms of biological role, translation initiation regulator which represses non-AUG initiated translation and repeat-associated non-AUG (RAN) initiated translation by acting as a competitive inhibitor of eukaryotic translation initiation factor 5 (EIF5) function. Increases the accuracy of translation initiation by impeding EIF5-dependent translation from non-AUG codons by competing with it for interaction with EIF2S2 within the 43S pre-initiation complex (PIC) in an EIF3C-binding dependent manner. This Homo sapiens (Human) protein is eIF5-mimic protein 1 (BZW2).